The sequence spans 260 residues: Hydroxyethylthiazole kinase 1 (260 aa).

Met-39 contributes to the substrate binding site. ATP contacts are provided by Arg-115 and Thr-160. Gly-187 lines the substrate pocket.

It belongs to the Thz kinase family. Mg(2+) is required as a cofactor.

It carries out the reaction 5-(2-hydroxyethyl)-4-methylthiazole + ATP = 4-methyl-5-(2-phosphooxyethyl)-thiazole + ADP + H(+). Its pathway is cofactor biosynthesis; thiamine diphosphate biosynthesis; 4-methyl-5-(2-phosphoethyl)-thiazole from 5-(2-hydroxyethyl)-4-methylthiazole: step 1/1. Functionally, catalyzes the phosphorylation of the hydroxyl group of 4-methyl-5-beta-hydroxyethylthiazole (THZ). This chain is Hydroxyethylthiazole kinase 1, found in Streptococcus pneumoniae (strain P1031).